The primary structure comprises 381 residues: Cobalt-precorrin-5B C(1)-methyltransferase (381 aa).

It belongs to the CbiD family.

The catalysed reaction is Co-precorrin-5B + S-adenosyl-L-methionine = Co-precorrin-6A + S-adenosyl-L-homocysteine. The protein operates within cofactor biosynthesis; adenosylcobalamin biosynthesis; cob(II)yrinate a,c-diamide from sirohydrochlorin (anaerobic route): step 6/10. Functionally, catalyzes the methylation of C-1 in cobalt-precorrin-5B to form cobalt-precorrin-6A. The sequence is that of Cobalt-precorrin-5B C(1)-methyltransferase from Prochlorococcus marinus (strain NATL2A).